The chain runs to 79 residues: Translational regulator CsrA (79 aa).

It belongs to the CsrA/RsmA family. In terms of assembly, homodimer; the beta-strands of each monomer intercalate to form a hydrophobic core, while the alpha-helices form wings that extend away from the core.

It is found in the cytoplasm. Functionally, a translational regulator that binds mRNA to regulate translation initiation and/or mRNA stability. Usually binds in the 5'-UTR at or near the Shine-Dalgarno sequence preventing ribosome-binding, thus repressing translation. Its main target seems to be the major flagellin gene, while its function is anatagonized by FliW. The polypeptide is Translational regulator CsrA (Geotalea uraniireducens (strain Rf4) (Geobacter uraniireducens)).